The chain runs to 482 residues: Glutamyl-tRNA(Gln) amidotransferase subunit A (482 aa).

Residues lysine 75 and serine 150 each act as charge relay system in the active site. Serine 174 (acyl-ester intermediate) is an active-site residue.

The protein belongs to the amidase family. GatA subfamily. Heterotrimer of A, B and C subunits.

It catalyses the reaction L-glutamyl-tRNA(Gln) + L-glutamine + ATP + H2O = L-glutaminyl-tRNA(Gln) + L-glutamate + ADP + phosphate + H(+). Functionally, allows the formation of correctly charged Gln-tRNA(Gln) through the transamidation of misacylated Glu-tRNA(Gln) in organisms which lack glutaminyl-tRNA synthetase. The reaction takes place in the presence of glutamine and ATP through an activated gamma-phospho-Glu-tRNA(Gln). In Thermosynechococcus vestitus (strain NIES-2133 / IAM M-273 / BP-1), this protein is Glutamyl-tRNA(Gln) amidotransferase subunit A.